The following is a 92-amino-acid chain: Small ribosomal subunit protein uS19 (92 aa).

This sequence belongs to the universal ribosomal protein uS19 family.

Protein S19 forms a complex with S13 that binds strongly to the 16S ribosomal RNA. The protein is Small ribosomal subunit protein uS19 of Methylocella silvestris (strain DSM 15510 / CIP 108128 / LMG 27833 / NCIMB 13906 / BL2).